A 442-amino-acid polypeptide reads, in one-letter code: Proline--tRNA ligase (442 aa).

This sequence belongs to the class-II aminoacyl-tRNA synthetase family. ProS type 2 subfamily. Homodimer.

Its subcellular location is the cytoplasm. The catalysed reaction is tRNA(Pro) + L-proline + ATP = L-prolyl-tRNA(Pro) + AMP + diphosphate. Functionally, catalyzes the attachment of proline to tRNA(Pro) in a two-step reaction: proline is first activated by ATP to form Pro-AMP and then transferred to the acceptor end of tRNA(Pro). This Mesorhizobium japonicum (strain LMG 29417 / CECT 9101 / MAFF 303099) (Mesorhizobium loti (strain MAFF 303099)) protein is Proline--tRNA ligase.